The primary structure comprises 333 residues: Adenosine deaminase (333 aa).

Zn(2+)-binding residues include His-12 and His-14. Residues His-14, Asp-16, and Gly-170 each contribute to the substrate site. His-197 serves as a coordination point for Zn(2+). Glu-200 acts as the Proton donor in catalysis. Asp-278 contacts Zn(2+). Position 279 (Asp-279) interacts with substrate.

It belongs to the metallo-dependent hydrolases superfamily. Adenosine and AMP deaminases family. Adenosine deaminase subfamily. Requires Zn(2+) as cofactor.

It catalyses the reaction adenosine + H2O + H(+) = inosine + NH4(+). The catalysed reaction is 2'-deoxyadenosine + H2O + H(+) = 2'-deoxyinosine + NH4(+). Catalyzes the hydrolytic deamination of adenosine and 2-deoxyadenosine. The sequence is that of Adenosine deaminase from Salmonella schwarzengrund (strain CVM19633).